We begin with the raw amino-acid sequence, 779 residues long: FAD-dependent monooxygenase BOA8 (779 aa).

Residues Glu85, Arg128, Asp331, and Ala344 each coordinate FAD. Helical transmembrane passes span 471–491, 504–524, 542–562, 587–607, 618–638, 665–685, and 742–762; these read AQLA…KTPE, VKLD…IWTI, AFLL…YFFF, ILPL…WSSI, NAWY…KFIV, ILIC…SIAF, and LILT…GLIV.

This sequence belongs to the paxM FAD-dependent monooxygenase family. The cofactor is FAD.

It localises to the membrane. It functions in the pathway polyketide biosynthesis. Functionally, FAD-dependent monooxygenase; part of the gene cluster B that mediates the biosynthesis of botcinic acid and its botcinin derivatives, acetate-derived polyketides that contribute to virulence when combined with the sesquiterpene botrydial. Botcinic acid and its derivatives have been shown to induce chlorosis and necrosis during host plant infection, but also have antifungal activities. Two polyketide synthases, BOA6 and BOA9, are involved in the biosynthesis of botcinins. BOA6 mediates the formation of the per-methylated tetraketide core by condensation of four units of malonyl-CoA with one unit of acetyl-CoA, which would be methylated in activated methylene groups to yield a bicyclic acid intermediate that could then either be converted to botrylactone derivatives or lose the starter acetate unit through a retro-Claisen type C-C bond cleavage to yield botcinin derivatives. The second polyketide synthase, BOA9, is probably required for the biosynthesis of the tetraketide side chain of botcinins. The methyltransferase (MT) domain within BOA6 is probably responsible for the incorporation of four methyl groups. The trans-enoyl reductase BOA5 might take over the enoyl reductase function of BOA6 that misses an ER domain. The monooxygenases BOA2, BOA3 and BOA4 might be involved in further hydroxylations at C4, C5 and C8, whereas BOA7, close to BOA9, could potentially be involved in the hydroxylation at C4 in the side chain of botcinins. This Botryotinia fuckeliana (strain B05.10) (Noble rot fungus) protein is FAD-dependent monooxygenase BOA8.